The chain runs to 560 residues: Membrane protein insertase YidC (560 aa).

6 helical membrane passes run 5–25 (IINL…WQYF), 334–354 (AIDF…MNFF), 357–377 (YVGN…LLMF), 431–451 (LPIL…YVTI), 476–496 (LFGL…WPIL), and 522–542 (FMPL…LIYW).

The protein belongs to the OXA1/ALB3/YidC family. Type 1 subfamily. As to quaternary structure, interacts with the Sec translocase complex via SecD. Specifically interacts with transmembrane segments of nascent integral membrane proteins during membrane integration.

The protein localises to the cell inner membrane. In terms of biological role, required for the insertion and/or proper folding and/or complex formation of integral membrane proteins into the membrane. Involved in integration of membrane proteins that insert both dependently and independently of the Sec translocase complex, as well as at least some lipoproteins. Aids folding of multispanning membrane proteins. This Rickettsia rickettsii (strain Iowa) protein is Membrane protein insertase YidC.